A 186-amino-acid polypeptide reads, in one-letter code: Negative modulator of initiation of replication (186 aa).

This sequence belongs to the SeqA family. As to quaternary structure, homodimer. Polymerizes to form helical filaments.

Its subcellular location is the cytoplasm. Functionally, negative regulator of replication initiation, which contributes to regulation of DNA replication and ensures that replication initiation occurs exactly once per chromosome per cell cycle. Binds to pairs of hemimethylated GATC sequences in the oriC region, thus preventing assembly of replication proteins and re-initiation at newly replicated origins. Repression is relieved when the region becomes fully methylated. The sequence is that of Negative modulator of initiation of replication from Haemophilus ducreyi (strain 35000HP / ATCC 700724).